An 878-amino-acid chain; its full sequence is MQTANEIRRTFLDFFEKNGHTVVNSSPLVPRNDPTLMFTNAGMVQFKNVFTGIEKRDYVRAASSQKCVRAGGKHNDLDNVGYTARHHTFFEMLGNFSFGDYFKDLAIEHAWNLITKDFGIDKSRLLVTVYHDDDQAADAWKKIAGLPESRIIRIPTSDNFWAMGDTGPCGPCSEIFYDHGEHIFGGPPGSPDQDGDRFIEIWNLVFMQFEQVDKETRIPLPKPSIDTGMGLERLAALLQGKHDNYDVDLLRALIEASAEASNTDPDGPHKVSHRVVADHLRSSSFLIADGVLPSNEGRGYVLRRIMRRAMRHAHLMGCTEPLLHKLVPALTRQMGEAYPELVRANALITETLKLEETRFKVTLDKGLKLLDDEITRIGSGQKLAGEVAFKLYDTYGFPLDLTQDALKAKGIGVDTDGFASAMERQRAEARKAWAGSGDTATETVWFELREKLGASEFLGYDAEQAEGKIVALVENGKVVEAVHPGHQVAVIANQTPFYGESGGQMGDTGVITLGTPGTGGKATIAVTDTQKKLGDLIVHFGTVEGGPVAVGEDAHFAVESTRRDATRGHHSATHLLHAALRDILGDHVTQKGSQVGPDRLRFDFAHTKALSAEETRAVEAEVNRRIRLNAEVATKVMTPDDAIKAGAMALFGEKYGEEVRVVSMGDLSTELCGGTHANRTGDIGGFKIVAESAVASGVRRIEAVTGPAFLAWAQAQEDLLAKAADTLKAAPADLPARIAGLMDDRRKLERELAEVRKQLATGGGQGAATKTVNGITYAGKVLSGVPAKDLKGMADEIKKQIGSGIIALVSDADGKASIVVCVTEDLTSKHSAVDLVRIGSEALGGKGGGGRPDMAQAGGPDASAAQAAVDRIEQALGG.

Residues His-570, His-574, Cys-672, and His-676 each coordinate Zn(2+). The disordered stretch occupies residues 844–864 (GGKGGGGRPDMAQAGGPDASA). Low complexity predominate over residues 855-864 (AQAGGPDASA).

This sequence belongs to the class-II aminoacyl-tRNA synthetase family. Zn(2+) is required as a cofactor.

It localises to the cytoplasm. The catalysed reaction is tRNA(Ala) + L-alanine + ATP = L-alanyl-tRNA(Ala) + AMP + diphosphate. In terms of biological role, catalyzes the attachment of alanine to tRNA(Ala) in a two-step reaction: alanine is first activated by ATP to form Ala-AMP and then transferred to the acceptor end of tRNA(Ala). Also edits incorrectly charged Ser-tRNA(Ala) and Gly-tRNA(Ala) via its editing domain. The sequence is that of Alanine--tRNA ligase from Paramagnetospirillum magneticum (strain ATCC 700264 / AMB-1) (Magnetospirillum magneticum).